The primary structure comprises 414 residues: Serine/threonine transporter SstT (414 aa).

The next 8 helical transmembrane spans lie at Gly16 to Ser36, Leu46 to Val66, Ile84 to Phe104, Ala143 to Leu163, Ala180 to Val200, Leu219 to Phe239, Met300 to Val320, and Val332 to Ile352.

The protein belongs to the dicarboxylate/amino acid:cation symporter (DAACS) (TC 2.A.23) family.

Its subcellular location is the cell inner membrane. It catalyses the reaction L-serine(in) + Na(+)(in) = L-serine(out) + Na(+)(out). The catalysed reaction is L-threonine(in) + Na(+)(in) = L-threonine(out) + Na(+)(out). Its function is as follows. Involved in the import of serine and threonine into the cell, with the concomitant import of sodium (symport system). This Salmonella newport (strain SL254) protein is Serine/threonine transporter SstT.